We begin with the raw amino-acid sequence, 194 residues long: Fatty acid metabolism regulator protein (194 aa).

The HTH tetR-type domain maps to 5-65 (RPKYMQIIDA…SLFKEKMGQF (61 aa)). The H-T-H motif DNA-binding region spans 28–47 (QVSKIAKQAGVADGTIYLYF).

In terms of assembly, homodimer. Binds to DNA.

It is found in the cytoplasm. Functionally, transcriptional regulator in fatty acid degradation. Represses transcription of genes required for fatty acid transport and beta-oxidation, including acdA, fadA, fadB, fadE, fadF, fadG, fadH, fadM, fadN, lcfA and lcfB. Binding of FadR to DNA is specifically inhibited by long chain fatty acyl-CoA compounds of 14-20 carbon atoms in length. The protein is Fatty acid metabolism regulator protein (fadR) of Bacillus subtilis (strain 168).